Reading from the N-terminus, the 666-residue chain is Long-chain-fatty-acid--CoA ligase ACSBG2 (666 aa).

ATP-binding positions include 230 to 238 (TSGTTGIPK), 418 to 423 (ELYGLS), Asp496, and Arg624.

This sequence belongs to the ATP-dependent AMP-binding enzyme family. Bubblegum subfamily. As to expression, testis-specific.

It is found in the cytoplasm. Its subcellular location is the membrane. It carries out the reaction a long-chain fatty acid + ATP + CoA = a long-chain fatty acyl-CoA + AMP + diphosphate. The catalysed reaction is (5Z,8Z,11Z,14Z)-eicosatetraenoate + ATP + CoA = (5Z,8Z,11Z,14Z)-eicosatetraenoyl-CoA + AMP + diphosphate. The enzyme catalyses hexadecanoate + ATP + CoA = hexadecanoyl-CoA + AMP + diphosphate. It catalyses the reaction (9Z)-octadecenoate + ATP + CoA = (9Z)-octadecenoyl-CoA + AMP + diphosphate. It carries out the reaction (9Z,12Z)-octadecadienoate + ATP + CoA = (9Z,12Z)-octadecadienoyl-CoA + AMP + diphosphate. The catalysed reaction is tetracosanoate + ATP + CoA = tetracosanoyl-CoA + AMP + diphosphate. Its function is as follows. Catalyzes the conversion of fatty acids such as long chain and very long-chain fatty acids to their active form acyl-CoAs for both synthesis of cellular lipids, and degradation via beta-oxidation. Can activate diverse saturated, monosaturated and polyunsaturated fatty acids. Has increased ability to activate oleic and linoleic acid. May play a role in spermatogenesis. The protein is Long-chain-fatty-acid--CoA ligase ACSBG2 of Homo sapiens (Human).